A 29-amino-acid chain; its full sequence is Sarcolamban B (29 aa).

Residues 7–27 (LFTTFLILAFLLFLLYAFYEA) form a helical membrane-spanning segment.

As to quaternary structure, interacts with SERCA. Strongly expressed in embryonic and larval somatic muscles and postembryonic heart.

It localises to the sarcoplasmic reticulum membrane. Plays an essential role in the regulation of calcium transport at the sarcoplasmic reticulum (SR), which is secondarily required for regular muscle contraction. This chain is Sarcolamban B, found in Drosophila melanogaster (Fruit fly).